Consider the following 389-residue polypeptide: Aminomethyltransferase (389 aa).

It belongs to the GcvT family. As to quaternary structure, the glycine cleavage system is composed of four proteins: P, T, L and H.

It catalyses the reaction N(6)-[(R)-S(8)-aminomethyldihydrolipoyl]-L-lysyl-[protein] + (6S)-5,6,7,8-tetrahydrofolate = N(6)-[(R)-dihydrolipoyl]-L-lysyl-[protein] + (6R)-5,10-methylene-5,6,7,8-tetrahydrofolate + NH4(+). Its function is as follows. The glycine cleavage system catalyzes the degradation of glycine. This is Aminomethyltransferase from Corynebacterium jeikeium (strain K411).